Consider the following 516-residue polypeptide: 3-phosphoshikimate 1-carboxyvinyltransferase, chloroplastic (516 aa).

The transit peptide at 1-72 directs the protein to the chloroplast; that stretch reads MAQSSRICHG…KVTASVSTSE (72 aa). Residues lysine 95, serine 96, and arginine 100 each contribute to the 3-phosphoshikimate site. Lysine 95 is a phosphoenolpyruvate binding site. Phosphoenolpyruvate contacts are provided by glycine 173 and arginine 203. Residues serine 250, serine 251, glutamine 252, serine 278, aspartate 403, and lysine 430 each contribute to the 3-phosphoshikimate site. Glutamine 252 lines the phosphoenolpyruvate pocket. The active-site Proton acceptor is the aspartate 403. Phosphoenolpyruvate contacts are provided by arginine 434, arginine 476, and lysine 501.

The protein belongs to the EPSP synthase family.

The protein localises to the plastid. It localises to the chloroplast. It catalyses the reaction 3-phosphoshikimate + phosphoenolpyruvate = 5-O-(1-carboxyvinyl)-3-phosphoshikimate + phosphate. It participates in metabolic intermediate biosynthesis; chorismate biosynthesis; chorismate from D-erythrose 4-phosphate and phosphoenolpyruvate: step 6/7. In terms of biological role, catalyzes the transfer of the enolpyruvyl moiety of phosphoenolpyruvate (PEP) to the 5-hydroxyl of shikimate-3-phosphate (S3P) to produce enolpyruvyl shikimate-3-phosphate and inorganic phosphate. This chain is 3-phosphoshikimate 1-carboxyvinyltransferase, chloroplastic, found in Brassica napus (Rape).